The following is a 192-amino-acid chain: Imidazoleglycerol-phosphate dehydratase (192 aa).

It belongs to the imidazoleglycerol-phosphate dehydratase family.

Its subcellular location is the cytoplasm. It catalyses the reaction D-erythro-1-(imidazol-4-yl)glycerol 3-phosphate = 3-(imidazol-4-yl)-2-oxopropyl phosphate + H2O. It functions in the pathway amino-acid biosynthesis; L-histidine biosynthesis; L-histidine from 5-phospho-alpha-D-ribose 1-diphosphate: step 6/9. This Hydrogenobaculum sp. (strain Y04AAS1) protein is Imidazoleglycerol-phosphate dehydratase.